Consider the following 92-residue polypeptide: YcgL domain-containing protein Shewmr7_2249 (92 aa).

Residues 1-85 (MLCAVYKSSR…PQVNLLAEHR (85 aa)) form the YcgL domain.

The protein is YcgL domain-containing protein Shewmr7_2249 of Shewanella sp. (strain MR-7).